The sequence spans 970 residues: uncharacterized protein (970 aa).

A helical membrane pass occupies residues 11–31 (WILKIGTILGLVCLGLFGVIF). The tract at residues 366–387 (ASNSNDNNNQNNNNNNNSSDVI) is disordered. Low complexity predominate over residues 367–387 (SNSNDNNNQNNNNNNNSSDVI). The next 11 membrane-spanning stretches (helical) occupy residues 515–535 (FASSFIAFGIIVLIAAVLLTL), 537–557 (YKLLGLYKALALGLSVVSSLV), 558–578 (IFSAVGGVVDVFSFVGIFFVI), 614–634 (FFANLEFHITWLISALVVIYL), 645–665 (LMAISAITSYFFSYGISIVLI), 726–746 (FLFVWLILLAIGVVMLVLYLV), 762–782 (SNGIIAGIGIVSLLYLAYCLI), 789–809 (CLSYLVSFILLCSGLFAVMYL), 816–836 (IDQSTIQLITFVYLFWLFFAA), 877–897 (IESSSLVFIFIIYSGFNFGGI), and 903–923 (LVIFYLIAIVGLFDVATAFLP).

It localises to the cell membrane. This is an uncharacterized protein from Mycoplasma genitalium (strain ATCC 33530 / DSM 19775 / NCTC 10195 / G37) (Mycoplasmoides genitalium).